A 349-amino-acid chain; its full sequence is Terpene cyclase rstn5 (349 aa).

A run of 5 helical transmembrane segments spans residues 4-24 (LTPL…WGVF), 81-101 (FMVQ…TEGA), 116-136 (GLFS…FWFV), 158-178 (VVPS…FDPF), and 181-201 (GLDL…CISL). N222 carries N-linked (GlcNAc...) asparagine glycosylation. Transmembrane regions (helical) follow at residues 228–248 (VAVG…GLTG), 271–291 (LVLL…LLLA), and 309–329 (TLAV…AWAL).

The protein belongs to the membrane-bound ascI terpene cyclase family.

It localises to the membrane. It functions in the pathway antifungal biosynthesis. Its function is as follows. Cyclase; part of the gene cluster that mediates the biosynthesis of the tetrahydropyranyl antifungal agent restricticin that acts as an inhibitor of CYP51 and blocks the ergosterol biosynthesis. The highly reducing polyketide synthase rstn3, the short chain dehydrogenase rstn4, the cyclase rstn5, the FAD-dependent monooxygenase rstn6 and the enoylreductase rstn7 are required to generate the first stable intermediate desmethylrestrictinol. Rstn3 with rstn7 biosynthesize the first polyketide chain intermediate that is reduced by rstn4, followed by epoxidation by rstn6 before 6-endo cyclization via epoxide opening by rstn5 leads to desmethylrestrictinol. The methyltransferase rstn1 then catalyzes the C4 O-methylation of desmethylrestrictinol to produce restrictinol, and the nonribosomal peptide synthetase rstn8 catalyzes the C3 esterification of restrictinol with glycine that leads to restricticin. The protein is Terpene cyclase rstn5 of Aspergillus nomiae NRRL (strain ATCC 15546 / NRRL 13137 / CBS 260.88 / M93).